Consider the following 110-residue polypeptide: MKFVLLFGVLLVTLFSYSSAEMLDDFDQADEDELLSLIEKEEARKDCIPKHHECTSNKHGCCRGHLFKYKCQCTTVVTQSREETERCFCGTPPHHKAAELVVGFGKKIFG.

A signal peptide spans 1–20 (MKFVLLFGVLLVTLFSYSSA). A propeptide spanning residues 21 to 44 (EMLDDFDQADEDELLSLIEKEEAR) is cleaved from the precursor. Disulfide bonds link C47/C62, C54/C71, C61/C89, and C73/C87.

It belongs to the neurotoxin 19 (CSTX) family. 03 subfamily. As to expression, expressed by the venom gland.

The protein resides in the secreted. In Lycosa singoriensis (Wolf spider), this protein is U1-lycotoxin-Ls1dd.